The primary structure comprises 202 residues: MTVAPRIGTATRTTSESDITVEINLDGTGKVDIDTGLPFFDHMLTAFGVHGSFDLKVHAKGDIEIDAHHTVEDTAIVLGQALLDAIGDKKGIRRFASCQLPMDEALVESVVDISGRPYFVISGEPDHMITSVIGGHYATVINEHFFETLALNSRITLHVICHYGRDPHHITEAEYKAVARALRGAVEMDPRQTGIPSTKGAL.

This sequence belongs to the imidazoleglycerol-phosphate dehydratase family.

Its subcellular location is the cytoplasm. The enzyme catalyses D-erythro-1-(imidazol-4-yl)glycerol 3-phosphate = 3-(imidazol-4-yl)-2-oxopropyl phosphate + H2O. The protein operates within amino-acid biosynthesis; L-histidine biosynthesis; L-histidine from 5-phospho-alpha-D-ribose 1-diphosphate: step 6/9. The polypeptide is Imidazoleglycerol-phosphate dehydratase (Corynebacterium glutamicum (strain ATCC 13032 / DSM 20300 / JCM 1318 / BCRC 11384 / CCUG 27702 / LMG 3730 / NBRC 12168 / NCIMB 10025 / NRRL B-2784 / 534)).